Consider the following 266-residue polypeptide: Ribosome-recycling factor, chloroplastic (266 aa).

The span at 1 to 26 (MPPLHAVSPAAAAAPPRALSSAARVP) shows a compositional bias: low complexity. The disordered stretch occupies residues 1–30 (MPPLHAVSPAAAAAPPRALSSAARVPQRPG). A chloroplast-targeting transit peptide spans 1–74 (MPPLHAVSPA…SDKRAVLRHA (74 aa)). 2 coiled-coil regions span residues 75-109 (TIEE…NTVR) and 207-266 (VAIR…LMKI).

It belongs to the RRF family.

It localises to the plastid. Its subcellular location is the chloroplast. Its function is as follows. Responsible for the release of ribosomes from messenger RNA at the termination of chloroplastic protein biosynthesis. This Oryza sativa subsp. indica (Rice) protein is Ribosome-recycling factor, chloroplastic.